The following is a 217-amino-acid chain: 25 kDa ookinete surface antigen (217 aa).

An N-terminal signal peptide occupies residues 1 to 16; that stretch reads MNKLYSLFLFLFIQLS. Residues 30–59 form the EGF-like 1; truncated domain; the sequence is CKRGFLIQMSGHLECKCENDLVLVNEETCE. EGF-like domains are found at residues 61 to 106, 106 to 150, and 153 to 193; these read KVLK…NVCI, IPNE…NKCS, and GETK…SICT. Cystine bridges form between Cys65-Cys80, Cys74-Cys92, Cys94-Cys105, Cys110-Cys120, Cys115-Cys133, Cys135-Cys149, Cys157-Cys168, Cys161-Cys177, and Cys179-Cys192. Asn112 is a glycosylation site (N-linked (GlcNAc...) asparagine). 2 N-linked (GlcNAc...) asparagine glycosylation sites follow: Asn165 and Asn187. Ser196 is lipidated: GPI-anchor amidated serine. A propeptide spans 197–217 (removed in mature form); that stretch reads AYNILNLSIMFILFSVCFFIM. Asn202 carries N-linked (GlcNAc...) asparagine glycosylation.

The protein resides in the cell membrane. This chain is 25 kDa ookinete surface antigen, found in Plasmodium falciparum (isolate NF54).